We begin with the raw amino-acid sequence, 100 residues long: Urease subunit gamma (100 aa).

It belongs to the urease gamma subunit family. In terms of assembly, heterotrimer of UreA (gamma), UreB (beta) and UreC (alpha) subunits. Three heterotrimers associate to form the active enzyme.

Its subcellular location is the cytoplasm. The enzyme catalyses urea + 2 H2O + H(+) = hydrogencarbonate + 2 NH4(+). The protein operates within nitrogen metabolism; urea degradation; CO(2) and NH(3) from urea (urease route): step 1/1. The chain is Urease subunit gamma from Cereibacter sphaeroides (strain ATCC 17029 / ATH 2.4.9) (Rhodobacter sphaeroides).